A 491-amino-acid chain; its full sequence is Protein nucleotidyltransferase YdiU (491 aa).

8 residues coordinate ATP: G94, G96, R97, K117, D129, G130, R180, and R187. D256 functions as the Proton acceptor in the catalytic mechanism. Mg(2+) contacts are provided by N257 and D266. An ATP-binding site is contributed by D266.

It belongs to the SELO family. It depends on Mg(2+) as a cofactor. Mn(2+) is required as a cofactor.

It carries out the reaction L-seryl-[protein] + ATP = 3-O-(5'-adenylyl)-L-seryl-[protein] + diphosphate. The enzyme catalyses L-threonyl-[protein] + ATP = 3-O-(5'-adenylyl)-L-threonyl-[protein] + diphosphate. The catalysed reaction is L-tyrosyl-[protein] + ATP = O-(5'-adenylyl)-L-tyrosyl-[protein] + diphosphate. It catalyses the reaction L-histidyl-[protein] + UTP = N(tele)-(5'-uridylyl)-L-histidyl-[protein] + diphosphate. It carries out the reaction L-seryl-[protein] + UTP = O-(5'-uridylyl)-L-seryl-[protein] + diphosphate. The enzyme catalyses L-tyrosyl-[protein] + UTP = O-(5'-uridylyl)-L-tyrosyl-[protein] + diphosphate. Its function is as follows. Nucleotidyltransferase involved in the post-translational modification of proteins. It can catalyze the addition of adenosine monophosphate (AMP) or uridine monophosphate (UMP) to a protein, resulting in modifications known as AMPylation and UMPylation. This chain is Protein nucleotidyltransferase YdiU, found in Clostridium botulinum (strain Loch Maree / Type A3).